Here is a 158-residue protein sequence, read N- to C-terminus: Protein-export protein SecB (158 aa).

Belongs to the SecB family. As to quaternary structure, homotetramer, a dimer of dimers. One homotetramer interacts with 1 SecA dimer.

The protein resides in the cytoplasm. One of the proteins required for the normal export of preproteins out of the cell cytoplasm. It is a molecular chaperone that binds to a subset of precursor proteins, maintaining them in a translocation-competent state. It also specifically binds to its receptor SecA. The sequence is that of Protein-export protein SecB from Pectobacterium atrosepticum (strain SCRI 1043 / ATCC BAA-672) (Erwinia carotovora subsp. atroseptica).